The following is a 381-amino-acid chain: Opsin Rh2 (381 aa).

The Extracellular portion of the chain corresponds to 1 to 56; that stretch reads MERSHLPETPFDLAHSGPRFQAQSSGNGSVLDNVLPDMAHLVNPYWSRFAPMDPMM. Residue asparagine 27 is glycosylated (N-linked (GlcNAc...) asparagine). A helical transmembrane segment spans residues 57 to 81; that stretch reads SKILGLFTLAIMIISCCGNGVVVYI. Residues 82 to 93 lie on the Cytoplasmic side of the membrane; it reads FGGTKSLRTPAN. Residues 94–119 form a helical membrane-spanning segment; it reads LLVLNLAFSDFCMMASQSPVMIINFY. The Extracellular segment spans residues 120-133; that stretch reads YETWVLGPLWCDIY. A disulfide bond links cysteine 130 and cysteine 207. Residues 134 to 153 form a helical membrane-spanning segment; the sequence is AGCGSLFGCVSIWSMCMIAF. At 154–172 the chain is on the cytoplasmic side; that stretch reads DRYNVIVKGINGTPMTIKT. A helical transmembrane segment spans residues 173 to 196; the sequence is SIMKILFIWMMAVFWTVMPLIGWS. Topologically, residues 197–220 are extracellular; it reads AYVPEGNLTACSIDYMTRMWNPRS. The chain crosses the membrane as a helical span at residues 221 to 248; sequence YLITYSLFVYYTPLFLICYSYWFIIAAV. Topologically, residues 249–283 are cytoplasmic; that stretch reads AAHEKAMREQAKKMNVKSLRSSEDCDKSAEGKLAK. The chain crosses the membrane as a helical span at residues 284 to 307; the sequence is VALTTISLWFMAWTPYLVICYFGL. Residues 308-314 lie on the Extracellular side of the membrane; that stretch reads FKIDGLT. A helical transmembrane segment spans residues 315-339; the sequence is PLTTIWGATFAKTSAVYNPIVYGIS. Lysine 326 bears the N6-(retinylidene)lysine mark. Topologically, residues 340–381 are cytoplasmic; sequence HPKYRIVLKEKCPMCVFGNTDEPKPDAPASDTETTSEADSKA. The segment at 359 to 381 is disordered; that stretch reads TDEPKPDAPASDTETTSEADSKA. The segment covering 370–381 has biased composition (polar residues); sequence DTETTSEADSKA.

It belongs to the G-protein coupled receptor 1 family. Opsin subfamily. In terms of processing, phosphorylated on some or all of the serine and threonine residues present in the C-terminal region. Predominant opsin expressed in the dorsal ocelli.

The protein localises to the membrane. In terms of biological role, visual pigments are the light-absorbing molecules that mediate vision. They consist of an apoprotein, opsin, covalently linked to cis-retinal. In Drosophila melanogaster (Fruit fly), this protein is Opsin Rh2 (Rh2).